The primary structure comprises 461 residues: MNREIYDFVAIGIGPFNLSLASLSAPLRGVRTLFLDKKSGFDWHPGMLIETSTLQNPFLADLVSLADPRSEYSYLNYCKLTNRIYSYYMRENHYLSRAEYTRYCQWVAARLPNLRFGCDVQGVLHDPESHSYLVTGQHTMSGQRFMFRCRKLVLGLGSQPYLPACCDRRAAPFIHSADYLRHKYELQGRASITIVGSGQSAAEVFHDLLRESGRHDYSLAWITRSPRFFQMENTKLTLELISPDYTEYFHDLPEARRQEILTQQNSLYKGINASLINQIYDLLDEKVHDGDNRYTLLTNSELRACRYDPLQERFQLDFQHLDCDRPFSHATDGLVLATGYSHEIPACINPIHDRIAWNADGSYRIGRNYAIDHEGSEIFVQNTGLLSHGVTNPDLGFCCYRNSQILRELTGTEHYRIETRTALQEFSPPADGVLKHRPARRAERRPTVAARPLMDIHRATL.

9–15 lines the FAD pocket; sequence VAIGIGP.

The protein belongs to the lysine N(6)-hydroxylase/L-ornithine N(5)-oxygenase family. FAD is required as a cofactor.

It functions in the pathway siderophore biosynthesis; alcaligin biosynthesis. The protein is Alcaligin biosynthesis enzyme (alcA) of Bordetella parapertussis (strain 12822 / ATCC BAA-587 / NCTC 13253).